The following is a 389-amino-acid chain: Chalcone synthase 4-2 (389 aa).

C164 is an active-site residue.

Belongs to the thiolase-like superfamily. Chalcone/stilbene synthases family.

It carries out the reaction (E)-4-coumaroyl-CoA + 3 malonyl-CoA + 3 H(+) = 2',4,4',6'-tetrahydroxychalcone + 3 CO2 + 4 CoA. Its pathway is secondary metabolite biosynthesis; flavonoid biosynthesis. Its function is as follows. The primary product of this enzyme is 4,2',4',6'-tetrahydroxychalcone (also termed naringenin-chalcone or chalcone) which can under specific conditions spontaneously isomerize into naringenin. This Medicago sativa (Alfalfa) protein is Chalcone synthase 4-2 (CHS4-2).